The primary structure comprises 422 residues: 3-carboxy-cis,cis-muconate cycloisomerase (422 aa).

It belongs to the class-II fumarase/aspartase family. As to quaternary structure, homotetramer.

The protein resides in the cytoplasm. The catalysed reaction is 2-(carboxymethyl)-5-oxo-2,5-dihydro-2-furoate = 3-carboxy-cis,cis-muconate + H(+). The protein operates within aromatic compound metabolism; beta-ketoadipate pathway; 5-oxo-4,5-dihydro-2-furylacetate from 3-carboxy-cis,cis-muconate: step 1/2. Catalyzes an anti cycloisomerization. In Pseudomonas putida (Arthrobacter siderocapsulatus), this protein is 3-carboxy-cis,cis-muconate cycloisomerase (pcaB).